Here is an 806-residue protein sequence, read N- to C-terminus: Glycerol-3-phosphate acyltransferase (806 aa).

The short motif at 305–310 (CHRSHM) is the HXXXXD motif element.

Belongs to the GPAT/DAPAT family.

The protein localises to the cell inner membrane. The enzyme catalyses sn-glycerol 3-phosphate + an acyl-CoA = a 1-acyl-sn-glycero-3-phosphate + CoA. Its pathway is phospholipid metabolism; CDP-diacylglycerol biosynthesis; CDP-diacylglycerol from sn-glycerol 3-phosphate: step 1/3. The chain is Glycerol-3-phosphate acyltransferase from Salmonella paratyphi B (strain ATCC BAA-1250 / SPB7).